The following is a 98-amino-acid chain: Large ribosomal subunit protein uL23c (98 aa).

The protein belongs to the universal ribosomal protein uL23 family. Part of the 50S ribosomal subunit.

The protein localises to the plastid. Its function is as follows. Binds to 23S rRNA. This chain is Large ribosomal subunit protein uL23c (rpl23), found in Euglena longa (Euglenophycean alga).